The chain runs to 340 residues: 4-dimethylallyltryptophan N-methyltransferase easF (340 aa).

This sequence belongs to the methyltransferase superfamily. Homodimer.

It catalyses the reaction 4-(3-methylbut-2-enyl)-L-tryptophan + S-adenosyl-L-methionine = 4-(3-methylbut-2-enyl)-L-abrine + S-adenosyl-L-homocysteine + H(+). The protein operates within alkaloid biosynthesis; ergot alkaloid biosynthesis. 4-dimethylallyltryptophan N-methyltransferase; part of the gene cluster that mediates the biosynthesis of fungal ergot alkaloid. DmaW catalyzes the first step of ergot alkaloid biosynthesis by condensing dimethylallyl diphosphate (DMAP) and tryptophan to form 4-dimethylallyl-L-tryptophan. The second step is catalyzed by the methyltransferase easF that methylates 4-dimethylallyl-L-tryptophan in the presence of S-adenosyl-L-methionine, resulting in the formation of 4-dimethylallyl-L-abrine. The catalase easC and the FAD-dependent oxidoreductase easE then transform 4-dimethylallyl-L-abrine to chanoclavine-I which is further oxidized by easD in the presence of NAD(+), resulting in the formation of chanoclavine-I aldehyde. Chanoclavine-I aldehyde is the precursor of ergoamides and ergopeptines in Clavicipitaceae, and clavine-type alcaloids such as fumiclavine in Trichocomaceae. However, the metabolites downstream of chanoclavine-I aldehyde in Arthrodermataceae have not been identified yet. The protein is 4-dimethylallyltryptophan N-methyltransferase easF of Trichophyton verrucosum (strain HKI 0517).